A 623-amino-acid polypeptide reads, in one-letter code: MSCRQFSSSYLSRSGGGGGGGLGSGGSIRSSYSRFSSSGGGGGGGRFSSSSGYGGGSSRVCGRGGGGSFGYSYGGGSGGGFSASSLGGGFGGGSRGFGGASGGGYSSSGGFGGGFGGGSGGGFGGGYGSGFGGFGGFGGGAGGGDGGILTANEKSTMQELNSRLASYLDKVQALEEANNDLENKIQDWYDKKGPAAIQKNYSPYYNTIDDLKDQIVDLTVGNNKTLLDIDNTRMTLDDFRIKFEMEQNLRQGVDADINGLRQVLDNLTMEKSDLEMQYETLQEELMALKKNHKEEMSQLTGQNSGDVNVEINVAPGKDLTKTLNDMRQEYEQLIAKNRKDIENQYETQITQIEHEVSSSGQEVQSSAKEVTQLRHGVQELEIELQSQLSKKAALEKSLEDTKNRYCGQLQMIQEQISNLEAQITDVRQEIECQNQEYSLLLSIKMRLEKEIETYHNLLEGGQEDFESSGAGKIGLGGRGGSGGSYGRGSRGGSGGSYGGGGSGGGYGGGSGSRGGSGGSYGGGSGSGGGSGGGYGGGSGGGHSGGSGGGHSGGSGGNYGGGSGSGGGSGGGYGGGSGSRGGSGGSHGGGSGFGGESGGSYGGGEEASGSGGGYGGGSGKSSHS.

Residues 1–13 (MSCRQFSSSYLSR) show a composition bias toward low complexity. The segment at 1–25 (MSCRQFSSSYLSRSGGGGGGGLGSG) is disordered. The tract at residues 1–152 (MSCRQFSSSY…GGDGGILTAN (152 aa)) is head. Phosphoserine occurs at positions 14 and 57. The span at 14 to 25 (SGGGGGGGLGSG) shows a compositional bias: gly residues. The tract at residues 153 to 188 (EKSTMQELNSRLASYLDKVQALEEANNDLENKIQDW) is coil 1A. In terms of domain architecture, IF rod spans 153–465 (EKSTMQELNS…NLLEGGQEDF (313 aa)). The tract at residues 189-207 (YDKKGPAAIQKNYSPYYNT) is linker 1. The coil 1B stretch occupies residues 208–299 (IDDLKDQIVD…KNHKEEMSQL (92 aa)). The interval 300–322 (TGQNSGDVNVEINVAPGKDLTKT) is linker 12. A coil 2 region spans residues 323–461 (LNDMRQEYEQ…ETYHNLLEGG (139 aa)). 2 disordered regions span residues 462 to 496 (QEDF…SGGS) and 534 to 623 (YGGG…SSHS). Residues 462–623 (QEDFESSGAG…GGGSGKSSHS (162 aa)) form a tail region. The segment covering 471–496 (GKIGLGGRGGSGGSYGRGSRGGSGGS) has biased composition (gly residues).

Belongs to the intermediate filament family. Heterotetramer of two type I and two type II keratins. As to expression, expressed in the terminally differentiated epidermis of palms and soles.

Functionally, may serve an important special function either in the mature palmar and plantar skin tissue or in the morphogenetic program of the formation of these tissues. Plays a role in keratin filament assembly. In Homo sapiens (Human), this protein is Keratin, type I cytoskeletal 9 (KRT9).